Reading from the N-terminus, the 493-residue chain is L-arabinose isomerase 1 (493 aa).

Residues Glu-301, Glu-326, His-343, and His-442 each contribute to the Mn(2+) site.

The protein belongs to the arabinose isomerase family. Mn(2+) serves as cofactor.

The catalysed reaction is beta-L-arabinopyranose = L-ribulose. Its pathway is carbohydrate degradation; L-arabinose degradation via L-ribulose; D-xylulose 5-phosphate from L-arabinose (bacterial route): step 1/3. Its function is as follows. Catalyzes the conversion of L-arabinose to L-ribulose. This is L-arabinose isomerase 1 from Bacillus licheniformis (strain ATCC 14580 / DSM 13 / JCM 2505 / CCUG 7422 / NBRC 12200 / NCIMB 9375 / NCTC 10341 / NRRL NRS-1264 / Gibson 46).